Consider the following 293-residue polypeptide: Small ribosomal subunit biogenesis GTPase RsgA (293 aa).

One can recognise a CP-type G domain in the interval 63–223; that stretch reads KNQLNRPPIA…VADTPGFSSL (161 aa). GTP-binding positions include 112–115 and 166–174; these read SKTD and GQSGVGKSS. Zn(2+) is bound by residues Cys247, Cys252, His254, and Cys260.

This sequence belongs to the TRAFAC class YlqF/YawG GTPase family. RsgA subfamily. As to quaternary structure, monomer. Associates with 30S ribosomal subunit, binds 16S rRNA. It depends on Zn(2+) as a cofactor.

The protein localises to the cytoplasm. In terms of biological role, one of several proteins that assist in the late maturation steps of the functional core of the 30S ribosomal subunit. Helps release RbfA from mature subunits. May play a role in the assembly of ribosomal proteins into the subunit. Circularly permuted GTPase that catalyzes slow GTP hydrolysis, GTPase activity is stimulated by the 30S ribosomal subunit. The protein is Small ribosomal subunit biogenesis GTPase RsgA of Shouchella clausii (strain KSM-K16) (Alkalihalobacillus clausii).